The following is a 669-amino-acid chain: MGDKDDVRIGVFVCHCGVNIKASVDVEEVVEYAKKLPGVVYATDYPFFCADPGQEIIQEAIKEHDLDRVVVAACTPKIHENTFRNCVKEAGLSPYYMEMVNIREHCSFVHMQEPEKATEKAKDLIRAAVERAKRLEDVPTKEVEVENSVLIIGGGIAGIQAALDLADQGFKVYLVEKEPTIGGNMARLAKTFPTDDCAMUILAPKMVQVGNHPNIEMITYAEVKDVDGYIGNFEVTIEKKPRYVDEDACTGCGVCAEVCPIEVPNEFDLGIGTRKAIYVPFPQAMPLVYTIDMEHCIQCGLCEEACPQDPPAIDFDQEPEEIRLKVGTIIVATGYEEFDASKLEEYGYGKYDNVITTLELERMINPAGPTEGHVIRPSDGKEPHRIVFIHCVGSRCPGKEEKGEAYCSRICCMFILKNAQLIKQHEPDAEVYCCYMDVRAFGKGYEEYYERAQKQFGVRFIRGRPAEIVEDPETKNLIVRVEDTLTGEPMEIEADLVVLGCGLVAPEETYSKLADILGIDRSPDGFFKELHPKLEPVSTKVRGVQIAGVAQGPKDIPDTVAQAKGAASEASIPMSQGKVEIELITATVDEDVCGGCGACAQVCPFDAIEMVEKDGKRVAEVQDVACQGCGQCAAACPSGAMQLRYYRDEQLMPQIEALLAEALEEEEEE.

153–176 provides a ligand contact to FAD; it reads GGGIAGIQAALDLADQGFKVYLVE. U200 is a non-standard amino acid (selenocysteine). 4Fe-4S ferredoxin-type domains lie at 239-270, 287-318, 584-613, and 617-646; these read KKPRYVDEDACTGCGVCAEVCPIEVPNEFDLG, LVYTIDMEHCIQCGLCEEACPQDPPAIDFDQE, ITATVDEDVCGGCGACAQVCPFDAIEMVEK, and RVAEVQDVACQGCGQCAAACPSGAMQLRYY. [4Fe-4S] cluster contacts are provided by C249, C252, C255, C259, C296, C299, C302, C306, C593, C596, C599, C603, C626, C629, C632, and C636.

It belongs to the HdrA family. As to quaternary structure, the ferredoxin:CoB-CoM heterodisulfide reductase is composed of three subunits; HdrA, HdrB and HdrC. The cofactor is [4Fe-4S] cluster. Requires FAD as cofactor.

Its pathway is cofactor metabolism; coenzyme M-coenzyme B heterodisulfide reduction; coenzyme B and coenzyme M from coenzyme M-coenzyme B heterodisulfide: step 1/1. In terms of biological role, part of a complex that catalyzes the reversible reduction of CoM-S-S-CoB to the thiol-coenzymes H-S-CoM (coenzyme M) and H-S-CoB (coenzyme B). The polypeptide is CoB--CoM heterodisulfide reductase iron-sulfur subunit A 1 (hdrA1) (Methanopyrus kandleri (strain AV19 / DSM 6324 / JCM 9639 / NBRC 100938)).